The primary structure comprises 517 residues: T-complex protein 11-like protein 2 (517 aa).

The tract at residues 1–59 (MPFNGEKQCVSEDQQSDSESSRFAEGVASLSDYECSRQSFTSDSSSKSSSPASTSPPRG) is disordered. The residue at position 16 (Ser16) is a Phosphoserine. Over residues 36-55 (SRQSFTSDSSSKSSSPASTS) the composition is skewed to low complexity.

Belongs to the TCP11 family. Interacts with FMNL2; this interaction promotes muscle-derived satellite cell (MDSC) migration and differentiation.

Its subcellular location is the cytoplasm. It is found in the cytoskeleton. In terms of biological role, promotes the migration of muscle-derived satellite cells (MDSCs) during differentiation throught interaction with FMNL2 and therefore may participate in microfilament assembly. The protein is T-complex protein 11-like protein 2 of Mus musculus (Mouse).